The primary structure comprises 81 residues: Sulfur carrier protein TusA (81 aa).

Catalysis depends on C19, which acts as the Cysteine persulfide intermediate.

The protein belongs to the sulfur carrier protein TusA family.

Its subcellular location is the cytoplasm. Functionally, sulfur carrier protein which probably makes part of a sulfur-relay system. The polypeptide is Sulfur carrier protein TusA (Shewanella baltica (strain OS185)).